A 311-amino-acid polypeptide reads, in one-letter code: Methionyl-tRNA formyltransferase (311 aa).

A (6S)-5,6,7,8-tetrahydrofolate-binding site is contributed by 109–112; sequence SLLP.

Belongs to the Fmt family.

It catalyses the reaction L-methionyl-tRNA(fMet) + (6R)-10-formyltetrahydrofolate = N-formyl-L-methionyl-tRNA(fMet) + (6S)-5,6,7,8-tetrahydrofolate + H(+). In terms of biological role, attaches a formyl group to the free amino group of methionyl-tRNA(fMet). The formyl group appears to play a dual role in the initiator identity of N-formylmethionyl-tRNA by promoting its recognition by IF2 and preventing the misappropriation of this tRNA by the elongation apparatus. The polypeptide is Methionyl-tRNA formyltransferase (Staphylococcus aureus (strain USA300)).